A 185-amino-acid chain; its full sequence is Elongation factor P (185 aa).

This sequence belongs to the elongation factor P family.

It localises to the cytoplasm. It functions in the pathway protein biosynthesis; polypeptide chain elongation. In terms of biological role, involved in peptide bond synthesis. Stimulates efficient translation and peptide-bond synthesis on native or reconstituted 70S ribosomes in vitro. Probably functions indirectly by altering the affinity of the ribosome for aminoacyl-tRNA, thus increasing their reactivity as acceptors for peptidyl transferase. This chain is Elongation factor P, found in Gloeothece citriformis (strain PCC 7424) (Cyanothece sp. (strain PCC 7424)).